Reading from the N-terminus, the 618-residue chain is MEGLIQTRGILSLPAKPIGVRRLLQPSHGLKQRLFTTNLPALSLSSNGHKKFQAFQQIPLGISVSHKERSRGFICKAEAAAAGGGNVFDEGDTAAMAVSPKIFGVEVTTLKKIVPLGLMFFCILFNYTILRDTKDVLVVTAKGSSAEIIPFLKTWVNLPMAIGFMLLYTKLSNVLSKKALFYTVIVPFIVYFGAFGFVMYPLSNLIHPEALADKLLATLGPRFMGPLAIMRIWSFCLFYVMAELWGSVVVSVLFWGFANQITTVDEAKKFYPLFGLGANVALIFSGRTVKYFSNMRKNLGPGVDGWAVSLKAMMSIVVGMGLAICFLYWWVNRYVPLPTRSKKKKVKPQMGTMESLKFLVSSPYIRDLATLVVAYGISINLVEVTWKSKLKAQFPSPNEYSAFMGDFSTCTGIATFTMMLLSQYVFKKYGWGVAAKITPTVLLLTGVAFFSLILFGGPFAPLVAKLGMTPLLAAVYVGALQNIFSKSAKYSLFDPCKEMAYIPLDEDTKVKGKAAIDVVCNPLGKSGGALIQQFMILTFGSLANSTPYLGVILLGIVTAWLAAAKSLEGQFNTLMSEEELEREMERASSVKIPVVSQEDAPSGETTSQLSEKSTPTGI.

A chloroplast-targeting transit peptide spans 1–76 (MEGLIQTRGI…KERSRGFICK (76 aa)). N-acetylalanine is present on alanine 77. The next 11 helical transmembrane spans lie at 110–130 (LKKI…YTIL), 148–168 (IIPF…MLLY), 179–199 (ALFY…GFVM), 237–257 (LFYV…FWGF), 270–289 (FYPL…GRTV), 312–332 (AMMS…WWVN), 368–388 (LATL…TWKS), 401–421 (SAFM…MMLL), 441–461 (VLLL…PFAP), 464–484 (AKLG…QNIF), and 542–562 (LANS…AWLA). The disordered stretch occupies residues 586 to 618 (RASSVKIPVVSQEDAPSGETTSQLSEKSTPTGI). Residues 603 to 618 (GETTSQLSEKSTPTGI) show a composition bias toward polar residues.

It belongs to the ADP/ATP translocase tlc (TC 2.A.12.2) family.

It is found in the plastid. The protein resides in the chloroplast membrane. The protein is ADP,ATP carrier protein 2, chloroplastic (AATP2) of Arabidopsis thaliana (Mouse-ear cress).